The chain runs to 328 residues: Phosphate acetyltransferase (328 aa).

This sequence belongs to the phosphate acetyltransferase and butyryltransferase family.

It localises to the cytoplasm. The catalysed reaction is acetyl-CoA + phosphate = acetyl phosphate + CoA. It functions in the pathway metabolic intermediate biosynthesis; acetyl-CoA biosynthesis; acetyl-CoA from acetate: step 2/2. The chain is Phosphate acetyltransferase (pta) from Staphylococcus aureus (strain COL).